The chain runs to 368 residues: DNA replication and repair protein RecF (368 aa).

Residue 30–37 (GRNGSGKT) coordinates ATP.

This sequence belongs to the RecF family.

Its subcellular location is the cytoplasm. In terms of biological role, the RecF protein is involved in DNA metabolism; it is required for DNA replication and normal SOS inducibility. RecF binds preferentially to single-stranded, linear DNA. It also seems to bind ATP. The protein is DNA replication and repair protein RecF of Chlorobaculum tepidum (strain ATCC 49652 / DSM 12025 / NBRC 103806 / TLS) (Chlorobium tepidum).